The sequence spans 557 residues: Laccase-11 (557 aa).

A signal peptide spans 1-23 (MKMGFLFLFCYLLAFLGYSPVDA). Plastocyanin-like domains follow at residues 31 to 147 (DVQV…PAPG) and 158 to 308 (ESNI…YKGV). N-linked (GlcNAc...) asparagine glycosylation is found at Asn-36, Asn-69, and Asn-77. Positions 81 and 83 each coordinate Cu cation. An N-linked (GlcNAc...) asparagine glycan is attached at Asn-115. Residues His-126 and His-128 each coordinate Cu cation. N-linked (GlcNAc...) asparagine glycans are attached at residues Asn-240, Asn-296, Asn-323, Asn-371, Asn-381, Asn-398, Asn-416, and Asn-440. In terms of domain architecture, Plastocyanin-like 3 spans 406 to 541 (DFPDRPPKAF…KMAFVVENGE (136 aa)). Residues His-458, His-461, His-463, His-520, Cys-521, His-522, and His-526 each coordinate Cu cation.

Belongs to the multicopper oxidase family. Cu cation serves as cofactor. As to expression, ubiquitous and constitutive.

Its subcellular location is the secreted. The protein localises to the extracellular space. It is found in the apoplast. It carries out the reaction 4 hydroquinone + O2 = 4 benzosemiquinone + 2 H2O. In terms of biological role, lignin degradation and detoxification of lignin-derived products. The chain is Laccase-11 (LAC11) from Arabidopsis thaliana (Mouse-ear cress).